The following is a 100-amino-acid chain: Urease subunit gamma (100 aa).

Belongs to the urease gamma subunit family. As to quaternary structure, heterotrimer of UreA (gamma), UreB (beta) and UreC (alpha) subunits. Three heterotrimers associate to form the active enzyme.

Its subcellular location is the cytoplasm. It catalyses the reaction urea + 2 H2O + H(+) = hydrogencarbonate + 2 NH4(+). The protein operates within nitrogen metabolism; urea degradation; CO(2) and NH(3) from urea (urease route): step 1/1. This is Urease subunit gamma from Staphylococcus saprophyticus subsp. saprophyticus (strain ATCC 15305 / DSM 20229 / NCIMB 8711 / NCTC 7292 / S-41).